The sequence spans 1012 residues: Structural polyprotein (1012 aa).

Asp30 is a binding site for a divalent metal cation. Residues 513-755 (ADKGYEVVAN…AGRQYHLAMA (243 aa)) form the Peptidase S50 domain. Residue Ser652 is the Nucleophile of the active site. Lys692 is an active-site residue. The disordered stretch occupies residues 970–1012 (MEMKHRNPRRAPPKPKPKPNAPTQRPPGRLGRWIRTVSDEDLE). The segment covering 975–986 (RNPRRAPPKPKP) has biased composition (basic residues). Positions 1003-1012 (IRTVSDEDLE) are interaction with VP1 protein.

As to quaternary structure, homotrimer. A central divalent metal stabilizes the VP2 trimer. Interacts with host ITGA4/ITGB1. In terms of assembly, homodimer. Interacts (via C-terminus) with VP1 in the cytoplasm. Interacts with VP2. Post-translationally, specific enzymatic cleavages yield mature proteins. The capsid assembly seems to be regulated by polyprotein processing. The protease VP4 cleaves itself off the polyprotein, thus releasing pre-VP2 and VP3 within the infected cell. During capsid assembly, the C-terminus of pre-VP2 is further processed by VP4, giving rise to VP2, the external capsid protein and three small peptides that all stay closely associated with the capsid.

It localises to the virion. Its subcellular location is the host cytoplasm. Its function is as follows. Capsid protein VP2 self assembles to form an icosahedral capsid with a T=13 symmetry, about 70 nm in diameter, and consisting of 260 VP2 trimers. The capsid encapsulates the genomic dsRNA. VP2 is also involved in attachment and entry into the host cell by interacting with host ITGA4/ITGB1. Functionally, the precursor of VP2 plays an important role in capsid assembly. First, pre-VP2 and VP2 oligomers assemble to form a procapsid. Then, the pre-VP2 intermediates may be processed into VP2 proteins by proteolytic cleavage mediated by VP4 to obtain the mature virion. The final capsid is composed of pentamers and hexamers but VP2 has a natural tendency to assemble into all-pentameric structures. Therefore pre-VP2 may be required to allow formation of the hexameric structures. Protease VP4 is a serine protease that cleaves the polyprotein into its final products. Pre-VP2 is first partially cleaved, and may be completely processed by VP4 upon capsid maturation. In terms of biological role, capsid protein VP3 plays a key role in virion assembly by providing a scaffold for the capsid made of VP2. May self-assemble to form a T=4-like icosahedral inner-capsid composed of at least 180 trimers. Plays a role in genomic RNA packaging by recruiting VP1 into the capsid and interacting with the dsRNA genome segments to form a ribonucleoprotein complex. Additionally, the interaction of the VP3 C-terminal tail with VP1 removes the inherent structural blockade of the polymerase active site. Thus, VP3 can also function as a transcriptional activator. Its function is as follows. Structural peptide 1 is a small peptide derived from pre-VP2 C-terminus. It destabilizes and perforates cell membranes, suggesting a role during entry. Functionally, structural peptide 2 is a small peptide derived from pVP2 C-terminus. It is not essential for the virus viability, but viral growth is affected when missing. Structural peptide 3 is a small peptide derived from pVP2 C-terminus. It is not essential for the virus viability, but viral growth is affected when missing. In terms of biological role, structural peptide 4 is a small peptide derived from pVP2 C-terminus. It is essential for the virus viability. In Avian infectious bursal disease virus (strain E) (IBDV), this protein is Structural polyprotein.